The following is an 881-amino-acid chain: Putative outer membrane usher protein YfcU (881 aa).

The first 29 residues, 1–29, serve as a signal peptide directing secretion; it reads MPDHSLFRLRILPWCIALAMSGSYSSVWA.

The protein belongs to the fimbrial export usher family.

The protein resides in the cell outer membrane. In terms of biological role, part of the yfcOPQRSUV fimbrial operon. Could contribute to adhesion to various surfaces in specific environmental niches. Increases adhesion to eukaryotic T24 bladder epithelial cells in the absence of fim genes. Probably involved in the export and assembly of fimbrial subunits across the outer membrane. The polypeptide is Putative outer membrane usher protein YfcU (yfcU) (Escherichia coli (strain K12)).